The sequence spans 706 residues: Termination factor NPH-I homolog (706 aa).

The 166-residue stretch at 62–227 (IGQGENTRGL…VPCFNMLSGR (166 aa)) folds into the Helicase ATP-binding domain. 75 to 82 (HQMGMGKT) contacts ATP. Positions 168–171 (DEAH) match the DEAH box motif. Positions 417-599 (QCLQPLKVLE…HLNSAFRDLL (183 aa)) constitute a Helicase C-terminal domain.

Belongs to the DEAD box helicase family. DEAH subfamily. Part of the viral DNA-directed RNA polymerase that consists of 8 polII-like subunits (RPB1, RPB2, RPB3, RPB5, RPB6, RPB7, RPB9, RPB10), a capping enzyme and a termination factor.

It is found in the virion. Functionally, putative DNA-dependent ATPase required for providing the needed energy to achieve the termination of early transcripts. The chain is Termination factor NPH-I homolog from Ornithodoros (relapsing fever ticks).